We begin with the raw amino-acid sequence, 141 residues long: Protein MGF 100-2L (141 aa).

The protein belongs to the asfivirus MGF 100 family.

Plays a role in virus cell tropism, and may be required for efficient virus replication in macrophages. This chain is Protein MGF 100-2L, found in African swine fever virus (isolate Tick/South Africa/Pretoriuskop Pr4/1996) (ASFV).